Reading from the N-terminus, the 368-residue chain is tRNA-specific 2-thiouridylase MnmA (368 aa).

ATP contacts are provided by residues 10–17 (AMSGGVDS) and M36. The Nucleophile role is filled by C108. C108 and C206 are disulfide-bonded. Residue G132 participates in ATP binding. Residues 156 to 158 (KDQ) form an interaction with tRNA region. C206 (cysteine persulfide intermediate) is an active-site residue. The segment at 312–313 (RY) is interaction with tRNA.

This sequence belongs to the MnmA/TRMU family.

Its subcellular location is the cytoplasm. The catalysed reaction is S-sulfanyl-L-cysteinyl-[protein] + uridine(34) in tRNA + AH2 + ATP = 2-thiouridine(34) in tRNA + L-cysteinyl-[protein] + A + AMP + diphosphate + H(+). In terms of biological role, catalyzes the 2-thiolation of uridine at the wobble position (U34) of tRNA, leading to the formation of s(2)U34. The sequence is that of tRNA-specific 2-thiouridylase MnmA from Natranaerobius thermophilus (strain ATCC BAA-1301 / DSM 18059 / JW/NM-WN-LF).